The primary structure comprises 495 residues: Cobyric acid synthase (495 aa).

The 170-residue stretch at 258–427 (GLRVAAVRLP…WHGLFDNDGF (170 aa)) folds into the GATase cobBQ-type domain. Residue Cys-339 is the Nucleophile of the active site. His-419 is a catalytic residue.

The protein belongs to the CobB/CobQ family. CobQ subfamily.

It participates in cofactor biosynthesis; adenosylcobalamin biosynthesis. Its function is as follows. Catalyzes amidations at positions B, D, E, and G on adenosylcobyrinic A,C-diamide. NH(2) groups are provided by glutamine, and one molecule of ATP is hydrogenolyzed for each amidation. In Mycobacterium sp. (strain KMS), this protein is Cobyric acid synthase.